Reading from the N-terminus, the 453-residue chain is Glutamate-rich protein 5 (453 aa).

Disordered stretches follow at residues 1 to 38 (MGCSSSALNKAGDDNRLRSATEESESCFVQPKPRALGR), 66 to 377 (NGVQ…EHPA), and 394 to 453 (TNEE…HSML). A compositionally biased stretch (basic and acidic residues) spans 11–21 (AGDDNRLRSAT). A Phosphoserine modification is found at serine 155. 2 stretches are compositionally biased toward polar residues: residues 230 to 243 (LQETVGENEQSQPL) and 271 to 283 (QETLGENEQSQLR). Composition is skewed to basic and acidic residues over residues 305–332 (EEEKRLQEMLGKDEQPQLRETIPREHGG), 364–374 (IQPERTVESME), and 394–403 (TNEEDQHIEG). The span at 404 to 413 (ETGETVETEM) shows a compositional bias: acidic residues. Residues 414-424 (ESEKVSEGAET) are compositionally biased toward basic and acidic residues.

This chain is Glutamate-rich protein 5 (ERICH5), found in Bos taurus (Bovine).